The primary structure comprises 231 residues: ATP-dependent dethiobiotin synthetase BioD (231 aa).

E12–V17 is an ATP binding site. T16 contributes to the Mg(2+) binding site. K37 is a catalytic residue. Residue S41 participates in substrate binding. Residues D51, E112–G115, and P202–L204 contribute to the ATP site. D51 and E112 together coordinate Mg(2+).

The protein belongs to the dethiobiotin synthetase family. As to quaternary structure, homodimer. Requires Mg(2+) as cofactor.

The protein resides in the cytoplasm. It catalyses the reaction (7R,8S)-7,8-diammoniononanoate + CO2 + ATP = (4R,5S)-dethiobiotin + ADP + phosphate + 3 H(+). It functions in the pathway cofactor biosynthesis; biotin biosynthesis; biotin from 7,8-diaminononanoate: step 1/2. In terms of biological role, catalyzes a mechanistically unusual reaction, the ATP-dependent insertion of CO2 between the N7 and N8 nitrogen atoms of 7,8-diaminopelargonic acid (DAPA, also called 7,8-diammoniononanoate) to form a ureido ring. This chain is ATP-dependent dethiobiotin synthetase BioD, found in Bacillus subtilis (strain 168).